A 449-amino-acid polypeptide reads, in one-letter code: Chitobiosyldiphosphodolichol beta-mannosyltransferase (449 aa).

Topologically, residues 1-7 (MFLEIPR) are lumenal. Residues 8–28 (WLLALIILYLSIPLVVYYVIP) traverse the membrane as a helical segment. The Dolichol recognition signature appears at 21–32 (LVVYYVIPYLFY). Residues 29–104 (YLFYGNKSTK…SNLKRKGGGT (76 aa)) are Cytoplasmic-facing. The segment at residues 105-125 (SVIFMVKKVLFQVLSIFKLLW) is an intramembrane region (helical). The Cytoplasmic portion of the chain corresponds to 126–449 (ELRGSDYILV…RTMRDLKLIH (324 aa)). Residues 435–449 (QSNWERTMRDLKLIH) form a required for oligomerization region.

It belongs to the glycosyltransferase group 1 family. Glycosyltransferase 33 subfamily. As to quaternary structure, homodimer. ALG1 forms mannosyltransferases (MT) heteromeric complexes with either ALG2 or ALG11.

It is found in the endoplasmic reticulum membrane. The catalysed reaction is an N,N'-diacetylchitobiosyl-diphospho-di-trans,poly-cis-dolichol + GDP-alpha-D-mannose = a beta-D-Man-(1-&gt;4)-beta-D-GlcNAc-(1-&gt;4)-alpha-D-GlcNAc-diphospho-di-trans,poly-cis-dolichol + GDP + H(+). The protein operates within protein modification; protein glycosylation. Functionally, participates in the formation of the lipid-linked precursor oligosaccharide for N-glycosylation. Involved in assembling the dolichol-pyrophosphate-GlcNAc(2)-Man(5) intermediate on the cytoplasmic surface of the ER. This is Chitobiosyldiphosphodolichol beta-mannosyltransferase (ALG1) from Saccharomyces cerevisiae (strain ATCC 204508 / S288c) (Baker's yeast).